A 558-amino-acid chain; its full sequence is Eukaryotic translation initiation factor 3 subunit D (558 aa).

The interval 296-310 (EFDLLTVNETSVEPP) is RNA gate. The interval 534-558 (DNTFESEGEEEDSDEEEQVKDAFQR) is disordered. The span at 537–551 (FESEGEEEDSDEEEQ) shows a compositional bias: acidic residues.

This sequence belongs to the eIF-3 subunit D family. Component of the eukaryotic translation initiation factor 3 (eIF-3) complex.

It is found in the cytoplasm. Functionally, mRNA cap-binding component of the eukaryotic translation initiation factor 3 (eIF-3) complex, which is involved in protein synthesis of a specialized repertoire of mRNAs and, together with other initiation factors, stimulates binding of mRNA and methionyl-tRNAi to the 40S ribosome. The eIF-3 complex specifically targets and initiates translation of a subset of mRNAs involved in cell proliferation. In the eIF-3 complex, eif3d specifically recognizes and binds the 7-methylguanosine cap of a subset of mRNAs. The chain is Eukaryotic translation initiation factor 3 subunit D from Nasonia vitripennis (Parasitic wasp).